The sequence spans 226 residues: Late protein I226R (226 aa).

The N-terminal stretch at methionine 1–glycine 16 is a signal peptide. Residue asparagine 164 is glycosylated (N-linked (GlcNAc...) asparagine; by host).

The protein belongs to the asfivirus I226R family.

Plays a role in the inhibition of host NF-kappa-B and IRF3 signaling pathways. Mechanistically, promotes the degradation of host IKBKG through enhancing its ubiquitination leading to inhibition of both pathways. The sequence is that of Late protein I226R from African swine fever virus (isolate Pig/Kenya/KEN-50/1950) (ASFV).